A 158-amino-acid polypeptide reads, in one-letter code: MKQVIIDLQLVCENTDNLPSEAQIQAWANRAIQPEFSDVEMTVRIVDEAESHDLNLTYRGKDKPTNVLSFPFECPDEVELSLLGDLVICRQVVEKEAEEQGKPLMAHWAHMVVHGCLHLLGYDHIEDAEAEEMEGLETEIMQSLGFDDPYLSEKEMHG.

Zn(2+) is bound by residues H114, H118, and H124.

The protein belongs to the endoribonuclease YbeY family. The cofactor is Zn(2+).

It is found in the cytoplasm. Functionally, single strand-specific metallo-endoribonuclease involved in late-stage 70S ribosome quality control and in maturation of the 3' terminus of the 16S rRNA. This chain is Endoribonuclease YbeY, found in Pasteurella multocida (strain Pm70).